The following is a 248-amino-acid chain: Cutinase cut1 (248 aa).

An N-terminal signal peptide occupies residues 1 to 17 (MRSLSLFTALLAGQAFA). Cys79 and Cys153 are oxidised to a cystine. Catalysis depends on Ser164, which acts as the Nucleophile. Cysteines 212 and 219 form a disulfide. The active site involves Asp216. The Proton donor/acceptor role is filled by His229.

It belongs to the cutinase family. The 2 disulfide bonds play a critical role in holding the catalytic residues in juxta-position; reduction of the disulfide bridges results in the complete inactivation of the enzyme.

It is found in the secreted. It carries out the reaction cutin + H2O = cutin monomers.. Its function is as follows. Catalyzes the hydrolysis of complex carboxylic polyesters found in the cell wall of plants. May degrade cutin, a macromolecule that forms the structure of the plant cuticle. May also degrade suberin, a specialized macromolecule found in the cell wall of various plant tissues. This chain is Cutinase cut1, found in Trichoderma harzianum (Hypocrea lixii).